The following is a 100-amino-acid chain: Enhancer of yellow 2 transcription factor (100 aa).

Belongs to the ENY2 family. As to quaternary structure, component of the nuclear pore complex (NPC)-associated AMEX complex (anchoring and mRNA export complex), composed of at least e(y)2 and xmas-2. Component of the SAGA transcription coactivator-HAT complexes, at least composed of Ada2b, e(y)2, Pcaf/Gcn5, Taf10 and Nipped-A/Trrap. Within the SAGA complex, e(y)2, Sgf11, and not/nonstop form an additional subcomplex of SAGA called the DUB module (deubiquitination module). Component of the THO complex, composed of at least e(y)2, HPR1, THO2, THOC5, THOC6 and THOC7. Interacts with e(y)1. Interacts with su(Hw) (via zinc fingers). Interacts with xmas-2; required for localization to the nuclear periphery. Interacts with the nuclear pore complex (NPC).

The protein resides in the nucleus. Its subcellular location is the nucleoplasm. It is found in the cytoplasm. Functionally, involved in mRNA export coupled transcription activation by association with both the AMEX and the SAGA complexes. The SAGA complex is a multiprotein complex that activates transcription by remodeling chromatin and mediating histone acetylation and deubiquitination. Within the SAGA complex, participates in a subcomplex that specifically deubiquitinates histone H2B. The SAGA complex is recruited to specific gene promoters by activators, where it is required for transcription. Required for nuclear receptor-mediated transactivation. Involved in transcription elongation by recruiting the THO complex onto nascent mRNA. The AMEX complex functions in docking export-competent ribonucleoprotein particles (mRNPs) to the nuclear entrance of the nuclear pore complex (nuclear basket). AMEX participates in mRNA export and accurate chromatin positioning in the nucleus by tethering genes to the nuclear periphery. In Drosophila pseudoobscura pseudoobscura (Fruit fly), this protein is Enhancer of yellow 2 transcription factor.